The chain runs to 373 residues: Probable G-protein coupled receptor 173 (373 aa).

At 1–26 (MANTTGEPEEVSGALSPPSAVAYVKL) the chain is on the extracellular side. Asparagine 3 carries N-linked (GlcNAc...) asparagine glycosylation. The chain crosses the membrane as a helical span at residues 27-47 (VLLGLIMCVSLAGNAILSLLV). Topologically, residues 48–59 (LKDRALHKAPYY) are cytoplasmic. Residues 60-80 (FLLDLCLADGIRSAVCFPFVL) traverse the membrane as a helical segment. Residues 81–97 (ASVRHGSSWTFSALSCK) are Extracellular-facing. Residues cysteine 96 and cysteine 174 are joined by a disulfide bond. Residues 98-118 (IVAFMAVLFCFHAAFMLFCIS) traverse the membrane as a helical segment. At 119–139 (VTRYMAIAHHRFYAKRMTLWT) the chain is on the cytoplasmic side. The chain crosses the membrane as a helical span at residues 140-160 (CAAVICMAWTLSVAMAFPPVF). Residues 161-188 (DVGTYKFIREEDQCIFEHRYFKANDTLG) lie on the Extracellular side of the membrane. The N-linked (GlcNAc...) asparagine glycan is linked to asparagine 184. The helical transmembrane segment at 189-209 (FMLMLAVLMAATHAVYGKLLL) threads the bilayer. Residues 210 to 287 (FEYRHRKMKP…VKGEKQLGRM (78 aa)) lie on the Cytoplasmic side of the membrane. The helical transmembrane segment at 288–308 (FYAITLLFLLLWSPYIVACYW) threads the bilayer. The Extracellular segment spans residues 309-322 (RVFVKACAVPHRYL). The helical transmembrane segment at 323–343 (ATAVWMSFAQAAVNPIVCFLL) threads the bilayer. Residues 344 to 373 (NKDLKKCLRTHAPCWGTGGAPAPREPYCVM) are Cytoplasmic-facing.

Belongs to the G-protein coupled receptor 1 family.

The protein resides in the cell membrane. Its function is as follows. Is a receptor for the SMIM20 derived peptides Phoenixin-14 and Phoenixin-20. It mediates the Phoenixin-14 and Phoenixin-20 augmentation of gonadotropin-releasing hormone (GNRH) signaling in the hypothalamus and pituitary gland. In the ovary, it mediates the effects of Phoenixin-14 and Phoenixin-20 induced granulosa cell proliferation during follicular growth. The sequence is that of Probable G-protein coupled receptor 173 (GPR173) from Bos taurus (Bovine).